The primary structure comprises 305 residues: Glutaminase (305 aa).

7 residues coordinate substrate: Ser-63, Asn-113, Glu-158, Asn-165, Tyr-189, Tyr-241, and Val-259.

Belongs to the glutaminase family. In terms of assembly, homotetramer.

It catalyses the reaction L-glutamine + H2O = L-glutamate + NH4(+). In Aliarcobacter butzleri (strain RM4018) (Arcobacter butzleri), this protein is Glutaminase.